Consider the following 195-residue polypeptide: Small ribosomal subunit protein eS7 (195 aa).

Phosphothreonine occurs at positions 146 and 151. S172 and S173 each carry phosphoserine.

Belongs to the eukaryotic ribosomal protein eS7 family. Component of the small ribosomal subunit (SSU). Mature yeast ribosomes consist of a small (40S) and a large (60S) subunit. The 40S small subunit contains 1 molecule of ribosomal RNA (18S rRNA) and at least 33 different proteins. The large 60S subunit contains 3 rRNA molecules (25S, 5.8S and 5S rRNA) and at least 46 different proteins. Interacts with snoRNA U3. uS11 interacts with MPP10. Component of the ribosomal small subunit (SSU) processome composed of at least 40 protein subunits and snoRNA U3.

Its subcellular location is the cytoplasm. It is found in the nucleus. The protein localises to the nucleolus. In terms of biological role, component of the ribosome, a large ribonucleoprotein complex responsible for the synthesis of proteins in the cell. The small ribosomal subunit (SSU) binds messenger RNAs (mRNAs) and translates the encoded message by selecting cognate aminoacyl-transfer RNA (tRNA) molecules. The large subunit (LSU) contains the ribosomal catalytic site termed the peptidyl transferase center (PTC), which catalyzes the formation of peptide bonds, thereby polymerizing the amino acids delivered by tRNAs into a polypeptide chain. The nascent polypeptides leave the ribosome through a tunnel in the LSU and interact with protein factors that function in enzymatic processing, targeting, and the membrane insertion of nascent chains at the exit of the ribosomal tunnel. eS7 is involved in nucleolar processing of pre-18S ribosomal RNA and ribosome assembly. The sequence is that of Small ribosomal subunit protein eS7 (rps7) from Schizosaccharomyces pombe (strain 972 / ATCC 24843) (Fission yeast).